Reading from the N-terminus, the 433-residue chain is Enolase (433 aa).

Gln-164 is a binding site for (2R)-2-phosphoglycerate. The active-site Proton donor is Glu-206. Residues Asp-243, Glu-289, and Asp-316 each coordinate Mg(2+). (2R)-2-phosphoglycerate contacts are provided by Lys-341, Arg-370, Ser-371, and Lys-392. Lys-341 acts as the Proton acceptor in catalysis.

The protein belongs to the enolase family. Mg(2+) serves as cofactor.

The protein resides in the cytoplasm. Its subcellular location is the secreted. It localises to the cell surface. It carries out the reaction (2R)-2-phosphoglycerate = phosphoenolpyruvate + H2O. Its pathway is carbohydrate degradation; glycolysis; pyruvate from D-glyceraldehyde 3-phosphate: step 4/5. Functionally, catalyzes the reversible conversion of 2-phosphoglycerate (2-PG) into phosphoenolpyruvate (PEP). It is essential for the degradation of carbohydrates via glycolysis. This chain is Enolase, found in Borreliella burgdorferi (strain ATCC 35210 / DSM 4680 / CIP 102532 / B31) (Borrelia burgdorferi).